The following is a 167-amino-acid chain: Urease accessory protein UreE (167 aa).

The protein belongs to the UreE family.

It is found in the cytoplasm. In terms of biological role, involved in urease metallocenter assembly. Binds nickel. Probably functions as a nickel donor during metallocenter assembly. This is Urease accessory protein UreE from Pseudomonas aeruginosa (strain UCBPP-PA14).